The following is a 759-amino-acid chain: Cullin-4A (759 aa).

A Glycyl lysine isopeptide (Lys-Gly) (interchain with G-Cter in SUMO2) cross-link involves residue K8. A Phosphoserine modification is found at S10. A Glycyl lysine isopeptide (Lys-Gly) (interchain with G-Cter in ubiquitin) cross-link involves residue K33. Residues 691–751 (DRQYQIDAAI…RDYMERDKDN (61 aa)) form the Cullin neddylation domain. K705 is covalently cross-linked (Glycyl lysine isopeptide (Lys-Gly) (interchain with G-Cter in NEDD8)).

It belongs to the cullin family. As to quaternary structure, can self-associate. Component of multiple DCX (DDB1-CUL4-X-box) E3 ubiquitin-protein ligase complexes that seem to consist of DDB1, CUL4A or CUL4B, RBX1 and a variable substrate recognition component which seems to belong to a protein family described as DCAF (Ddb1- and Cul4-associated factor) or CDW (CUL4-DDB1-associated WD40-repeat) proteins. Component of the CSA complex (DCX(ERCC8) complex) containing ERCC8, RBX1, DDB1 and CUL4A; the CSA complex interacts with RNA polymerase II; upon UV irradiation it interacts with the COP9 signalosome and preferentially with the hyperphosphorylated form of RNA polymerase II. Component of the DCX(DET1-COP1) complex with the substrate recognition component DET1 and COP1. Component of the DCX(DDB2) complex with the substrate recognition component DDB2. Component of the DCX(DTL) complex with the putative substrate recognition component DTL. Component of DCX complexes part of the DesCEND (destruction via C-end degrons) pathway, which contain either TRPC4AP or DCAF12 as substrate-recognition component. Component of the DCX(AMBRA1) complex with the substrate recognition component AMBRA1. Interacts with DDB1, RBX1, RNF7, CDT1, TIP120A/CAND1, SKP2, CDKN1B, MDM2, TP53 and HOXA9. Interacts with DDB2; the interactions with DDB2 and CAND1 are mutually exclusive. Interacts with DCAF1, DTL, DDA1, DCAF6, DCAF4, DCAF16, DCAF17, DET1, WDTC1, DCAF5, DCAF11, WDR24A, COP1, PAFAH1B1, ERCC8, GRWD1, FBXW5, RBBP7, GNB2, WSB1, WSB2, NUP43, PWP1, FBXW8, ATG16L1, KATNB1, RBBP4, RBBP5, LRWD1 and DCAF8. May interact with WDR26, WDR51B, SNRNP40, WDR61, WDR76, WDR5. Interacts (when neddylated) with ARIH1; leading to activate the E3 ligase activity of ARIH1. The DDB1-CUL4A complex interacts with CRY1. Interacts (unneddylated form) with DCUN1D1, DCUN1D2, DCUN1D3, DCUN1D4 and DCUN1D5; these interactions promote the cullin neddylation. (Microbial infection) Interacts with Epstein-Barr virus BPLF1. In terms of processing, neddylated; required for activity of cullin-RING-based E3 ubiquitin-protein ligase complexes. Deneddylated via its interaction with the COP9 signalosome (CSN) complex. Post-translationally, (Microbial infection) Deneddylated by Epstein-Barr virus BPLF1 leading to a S-phase-like environment that is required for efficient replication of the viral genome.

It participates in protein modification; protein ubiquitination. Core component of multiple cullin-RING-based E3 ubiquitin-protein ligase complexes which mediate the ubiquitination of target proteins. As a scaffold protein may contribute to catalysis through positioning of the substrate and the ubiquitin-conjugating enzyme. The E3 ubiquitin-protein ligase activity of the complex is dependent on the neddylation of the cullin subunit and is inhibited by the association of the deneddylated cullin subunit with TIP120A/CAND1. The functional specificity of the E3 ubiquitin-protein ligase complex depends on the variable substrate recognition component. DCX(DET1-COP1) directs ubiquitination of JUN. DCX(DDB2) directs ubiquitination of XPC. DCX(DDB2) ubiquitinates histones H3-H4 and is required for efficient histone deposition during replication-coupled (H3.1) and replication-independent (H3.3) nucleosome assembly, probably by facilitating the transfer of H3 from ASF1A/ASF1B to other chaperones involved in histone deposition. DCX(DTL) plays a role in PCNA-dependent polyubiquitination of CDT1 and MDM2-dependent ubiquitination of p53/TP53 in response to radiation-induced DNA damage and during DNA replication. DCX(DTL) directs autoubiquitination of DTL. In association with DDB1 and SKP2 probably is involved in ubiquitination of CDKN1B/p27kip. Is involved in ubiquitination of HOXA9. The DDB1-CUL4A-DTL E3 ligase complex regulates the circadian clock function by mediating the ubiquitination and degradation of CRY1. The DCX(ERCC8) complex (also named CSA complex) plays a role in transcription-coupled repair (TCR). A number of DCX complexes (containing either TRPC4AP or DCAF12 as substrate-recognition component) are part of the DesCEND (destruction via C-end degrons) pathway, which recognizes a C-degron located at the extreme C terminus of target proteins, leading to their ubiquitination and degradation. The DCX(AMBRA1) complex is a master regulator of the transition from G1 to S cell phase by mediating ubiquitination of phosphorylated cyclin-D (CCND1, CCND2 and CCND3). The DCX(AMBRA1) complex also acts as a regulator of Cul5-RING (CRL5) E3 ubiquitin-protein ligase complexes by mediating ubiquitination and degradation of Elongin-C (ELOC) component of CRL5 complexes. With CUL4B, contributes to ribosome biogenesis. This Homo sapiens (Human) protein is Cullin-4A.